A 327-amino-acid chain; its full sequence is Ribose-phosphate pyrophosphokinase (327 aa).

ATP-binding positions include 40 to 42 (DGE) and 99 to 100 (RQ). Histidine 134 and aspartate 173 together coordinate Mg(2+). The active site involves lysine 196. D-ribose 5-phosphate-binding positions include arginine 198, aspartate 222, and 226–230 (DTANT).

Belongs to the ribose-phosphate pyrophosphokinase family. Class I subfamily. Homohexamer. Mg(2+) is required as a cofactor.

It is found in the cytoplasm. It carries out the reaction D-ribose 5-phosphate + ATP = 5-phospho-alpha-D-ribose 1-diphosphate + AMP + H(+). It participates in metabolic intermediate biosynthesis; 5-phospho-alpha-D-ribose 1-diphosphate biosynthesis; 5-phospho-alpha-D-ribose 1-diphosphate from D-ribose 5-phosphate (route I): step 1/1. Its function is as follows. Involved in the biosynthesis of the central metabolite phospho-alpha-D-ribosyl-1-pyrophosphate (PRPP) via the transfer of pyrophosphoryl group from ATP to 1-hydroxyl of ribose-5-phosphate (Rib-5-P). The sequence is that of Ribose-phosphate pyrophosphokinase from Chromobacterium violaceum (strain ATCC 12472 / DSM 30191 / JCM 1249 / CCUG 213 / NBRC 12614 / NCIMB 9131 / NCTC 9757 / MK).